Consider the following 245-residue polypeptide: 5'-nucleotidase SurE (245 aa).

The a divalent metal cation site is built by aspartate 8, aspartate 9, serine 39, and asparagine 91.

The protein belongs to the SurE nucleotidase family. The cofactor is a divalent metal cation.

The protein localises to the cytoplasm. It carries out the reaction a ribonucleoside 5'-phosphate + H2O = a ribonucleoside + phosphate. In terms of biological role, nucleotidase that shows phosphatase activity on nucleoside 5'-monophosphates. This Psychromonas ingrahamii (strain DSM 17664 / CCUG 51855 / 37) protein is 5'-nucleotidase SurE.